The following is a 227-amino-acid chain: Dephospho-CoA kinase (227 aa).

The DPCK domain occupies 31-227; it reads KIGLTGGIGS…EKLFQFINCL (197 aa). 39 to 44 is an ATP binding site; sequence GSGKST.

Belongs to the CoaE family.

It is found in the cytoplasm. The enzyme catalyses 3'-dephospho-CoA + ATP = ADP + CoA + H(+). It functions in the pathway cofactor biosynthesis; coenzyme A biosynthesis; CoA from (R)-pantothenate: step 5/5. In terms of biological role, catalyzes the phosphorylation of the 3'-hydroxyl group of dephosphocoenzyme A to form coenzyme A. This Clostridium tetani (strain Massachusetts / E88) protein is Dephospho-CoA kinase.